A 156-amino-acid chain; its full sequence is Cyanate hydratase (156 aa).

Catalysis depends on residues Arg-96, Glu-99, and Ser-122.

This sequence belongs to the cyanase family.

The enzyme catalyses cyanate + hydrogencarbonate + 3 H(+) = NH4(+) + 2 CO2. Catalyzes the reaction of cyanate with bicarbonate to produce ammonia and carbon dioxide. In Burkholderia vietnamiensis (strain G4 / LMG 22486) (Burkholderia cepacia (strain R1808)), this protein is Cyanate hydratase.